A 133-amino-acid polypeptide reads, in one-letter code: Binder of sperm protein homolog 1 (133 aa).

A signal peptide spans 1 to 20 (MAQPLDFLLVSICLFHSLFS). Fibronectin type-II domains lie at 40 to 84 (TEDG…YCAL) and 85 to 133 (SDYA…YCIE). Cystine bridges form between C45-C69, C59-C82, C90-C116, and C104-C131. N72 carries N-linked (GlcNAc...) asparagine glycosylation.

The protein belongs to the seminal plasma protein family. In terms of tissue distribution, expressed only in the epididymis.

The protein localises to the secreted. Its function is as follows. Binds sperm in vitro and promotes sperm capacitation. Specifically promotes capacitation induced by high density lipoproteins (HDLs). Also binds heparin, phospholipid liposomes, and weakly to gelatin. Does not bind chondroitin sulfate B. This Mus musculus (Mouse) protein is Binder of sperm protein homolog 1 (Bsph1).